The primary structure comprises 494 residues: mRNA decay activator protein ZFP36L2 (494 aa).

Phosphoserine is present on serine 57. The segment at 93-113 is disordered; it reads GGPTSYGTLKEPSGGGGTALL. At serine 125 the chain carries Phosphoserine. Positions 153–158 match the RNA-binding motif; the sequence is RYKTEL. C3H1-type zinc fingers lie at residues 153-181 and 191-219; these read RYKT…HGFH and KYKT…HNAD. The tract at residues 170 to 211 is RNA-binding; sequence YGEKCQFAHGFHELRSLTRHPKYKTELCRTFHTIGFCPYGPR. Phosphothreonine is present on threonine 238. Disordered regions lie at residues 257–293 and 397–494; these read SLSF…PPSC and QQQQ…ISDD. Pro residues predominate over residues 406–415; it reads PAQPPAPPSA. Low complexity-rich tracts occupy residues 416-435 and 459-478; these read TLPA…QLPR and YLSG…PSLD. Phosphoserine; by RPS6KA1 is present on residues serine 490 and serine 492.

In terms of assembly, associates with the cytoplasmic CCR4-NOT deadenylase to trigger ARE-containing mRNA deadenylation and decay processes. Interacts with CNOT7; this interaction is inhibited in response to phorbol 12-myristate 13-acetate (PMA) treatment in a p38 MAPK-dependent manner. Interacts with CNOT6L. Post-translationally, phosphorylated by RPS6KA1 at Ser-490 and Ser-492 upon phorbol 12-myristate 13-acetate (PMA) treatment; this phosphorylation results in dissociation of the CCR4-NOT-deadenylase complex and induces p38 MAPK-mediated stabilization of the low-density lipoprotein (LDL) receptor (LDLR) mRNA. Phosphorylation occurs during early preadipocyte differentiation. Expressed mainly in the basal epidermal layer, weakly in the suprabasal epidermal layers. Expressed in epidermal keratinocytes (at protein level). Expressed in oocytes.

It localises to the nucleus. The protein localises to the cytoplasm. Zinc-finger RNA-binding protein that destabilizes several cytoplasmic AU-rich element (ARE)-containing mRNA transcripts by promoting their poly(A) tail removal or deadenylation, and hence provide a mechanism for attenuating protein synthesis. Acts as a 3'-untranslated region (UTR) ARE mRNA-binding adapter protein to communicate signaling events to the mRNA decay machinery. Functions by recruiting the CCR4-NOT deadenylase complex and probably other components of the cytoplasmic RNA decay machinery to the bound ARE-containing mRNAs, and hence promotes ARE-mediated mRNA deadenylation and decay processes. Binds to 3'-UTR ARE of numerous mRNAs. Promotes ARE-containing mRNA decay of the low-density lipoprotein (LDL) receptor (LDLR) mRNA in response to phorbol 12-myristate 13-acetate (PMA) treatment in a p38 MAPK-dependent manner. Positively regulates early adipogenesis by promoting ARE-mediated mRNA decay of immediate early genes (IEGs). Plays a role in mature peripheral neuron integrity by promoting ARE-containing mRNA decay of the transcriptional repressor REST mRNA. Plays a role in ovulation and oocyte meiotic maturation by promoting ARE-mediated mRNA decay of the luteinizing hormone receptor LHCGR mRNA. Acts as a negative regulator of erythroid cell differentiation: promotes glucocorticoid-induced self-renewal of erythroid cells by binding mRNAs that are induced or highly expressed during terminal erythroid differentiation and promotes their degradation, preventing erythroid cell differentiation. In association with ZFP36L1 maintains quiescence on developing B lymphocytes by promoting ARE-mediated decay of several mRNAs encoding cell cycle regulators that help B cells progress through the cell cycle, and hence ensuring accurate variable-diversity-joining (VDJ) recombination process and functional immune cell formation. Together with ZFP36L1 is also necessary for thymocyte development and prevention of T-cell acute lymphoblastic leukemia (T-ALL) transformation by promoting ARE-mediated mRNA decay of the oncogenic transcription factor NOTCH1 mRNA. The chain is mRNA decay activator protein ZFP36L2 from Homo sapiens (Human).